The sequence spans 342 residues: P2Y purinoceptor 12 (342 aa).

At 1 to 27 (MQAVDNLTSAPGNTSLCTRDYKITQVL) the chain is on the extracellular side. 2 N-linked (GlcNAc...) asparagine glycosylation sites follow: N6 and N13. 2 disulfide bridges follow: C17–C270 and C97–C175. The chain crosses the membrane as a helical span at residues 28–50 (FPLLYTVLFFVGLITNGLAMRIF). Residues 51-61 (FQIRSKSNFII) lie on the Cytoplasmic side of the membrane. Phosphoserine occurs at positions 55 and 57. A helical membrane pass occupies residues 62–82 (FLKNTVISDLLMILTFPFKIL). The Extracellular portion of the chain corresponds to 83–97 (SDAKLGTGPLRTFVC). ADP is bound by residues R93, C97, and Y105. A helical transmembrane segment spans residues 98–118 (QVTSVIFYFTMYISISFLGLI). Topologically, residues 119 to 142 (TIDRYQKTTRPFKTSNPKNLLGAK) are cytoplasmic. A helical membrane pass occupies residues 143–162 (ILSVVIWAFMFLLSLPNMIL). Residues 156 to 159 (SLPN), 175 to 179 (CSFLK), H187, and N191 each bind ADP. The Extracellular portion of the chain corresponds to 163-185 (TNRQPRDKNVKKCSFLKSEFGLV). Residues 186–207 (WHEIVNYICQVIFWINFLIVIV) form a helical membrane-spanning segment. At 208–233 (CYTLITKELYRSYVRTRGVGKVPRKK) the chain is on the cytoplasmic side. The chain crosses the membrane as a helical span at residues 234–259 (VNVKVFIIIAVFFICFVPFHFARIPY). ADP contacts are provided by residues 256 to 259 (RIPY), Q263, and K280. The Extracellular portion of the chain corresponds to 260–278 (TLSQTRDVFDCTAENTLFY). A helical membrane pass occupies residues 279–298 (VKESTLWLTSLNACLDPFIY). Residues 299-342 (FFLCKSFRNSLISMLKCPNSATSLSQDNRKKEQDGGDPNEETPM) lie on the Cytoplasmic side of the membrane. Residues 319–342 (ATSLSQDNRKKEQDGGDPNEETPM) are disordered. Residues 333–342 (GGDPNEETPM) show a composition bias toward acidic residues.

This sequence belongs to the G-protein coupled receptor 1 family. In terms of tissue distribution, highly expressed in the platelets, lower levels in the brain. Lowest levels in the lung, appendix, pituitary and adrenal gland. Expressed in the spinal cord and in the fetal brain.

The protein localises to the cell membrane. Functionally, receptor for ADP and ATP coupled to G-proteins that inhibit the adenylyl cyclase second messenger system. Not activated by UDP and UTP. Required for normal platelet aggregation and blood coagulation. The sequence is that of P2Y purinoceptor 12 (P2RY12) from Homo sapiens (Human).